The sequence spans 244 residues: Small ribosomal subunit protein uS2m (244 aa).

This sequence belongs to the universal ribosomal protein uS2 family.

Its subcellular location is the mitochondrion. This is Small ribosomal subunit protein uS2m (mrps2) from Dictyostelium discoideum (Social amoeba).